The chain runs to 612 residues: Beta-mannosyltransferase 5 (612 aa).

Residues 1–12 (MVQKQYRFAPKS) lie on the Cytoplasmic side of the membrane. The helical transmembrane segment at 13 to 33 (IFTFVFLCFVAIVVIISTSSL) threads the bilayer. The Extracellular segment spans residues 34–612 (VQVEESLDPI…YRAHLKRWQN (579 aa)). 3 N-linked (GlcNAc...) asparagine glycosylation sites follow: asparagine 224, asparagine 230, and asparagine 480.

It belongs to the BMT family.

It localises to the membrane. In terms of biological role, beta-mannosyltransferase involved in cell wall biosynthesis. Required for beta-1,2-mannose transfer on phospholipomannan. This is Beta-mannosyltransferase 5 (BMT5) from Candida albicans (strain SC5314 / ATCC MYA-2876) (Yeast).